The following is a 1071-amino-acid chain: ATP-dependent helicase/deoxyribonuclease subunit B (1071 aa).

The protein belongs to the helicase family. AddB/RexB type 2 subfamily. In terms of assembly, heterodimer of AddA and RexB. Mg(2+) is required as a cofactor.

Functionally, the heterodimer acts as both an ATP-dependent DNA helicase and an ATP-dependent, dual-direction single-stranded exonuclease. Recognizes the chi site generating a DNA molecule suitable for the initiation of homologous recombination. This subunit has 5' -&gt; 3' nuclease activity but not helicase activity. The polypeptide is ATP-dependent helicase/deoxyribonuclease subunit B (Streptococcus pyogenes serotype M1).